We begin with the raw amino-acid sequence, 779 residues long: FAD-dependent monooxygenase BOA8 (779 aa).

FAD-binding residues include E85, R128, D331, and A344. Transmembrane regions (helical) follow at residues 471–491 (AQLA…KTPE), 504–524 (VKLD…IWTI), 542–562 (AFLL…YFFF), 587–607 (ILPL…WSSI), 618–638 (NAWY…KFIV), 665–685 (ILIC…SIAF), and 742–762 (LILT…GLIV).

Belongs to the paxM FAD-dependent monooxygenase family. FAD is required as a cofactor.

The protein localises to the membrane. It participates in polyketide biosynthesis. Functionally, FAD-dependent monooxygenase; part of the gene cluster B that mediates the biosynthesis of botcinic acid and its botcinin derivatives, acetate-derived polyketides that contribute to virulence when combined with the sesquiterpene botrydial. Botcinic acid and its derivatives have been shown to induce chlorosis and necrosis during host plant infection, but also have antifungal activities. Two polyketide synthases, BOA6 and BOA9, are involved in the biosynthesis of botcinins. BOA6 mediates the formation of the per-methylated tetraketide core by condensation of four units of malonyl-CoA with one unit of acetyl-CoA, which would be methylated in activated methylene groups to yield a bicyclic acid intermediate that could then either be converted to botrylactone derivatives or lose the starter acetate unit through a retro-Claisen type C-C bond cleavage to yield botcinin derivatives. The second polyketide synthase, BOA9, is probably required for the biosynthesis of the tetraketide side chain of botcinins. The methyltransferase (MT) domain within BOA6 is probably responsible for the incorporation of four methyl groups. The trans-enoyl reductase BOA5 might take over the enoyl reductase function of BOA6 that misses an ER domain. The monooxygenases BOA2, BOA3 and BOA4 might be involved in further hydroxylations at C4, C5 and C8, whereas BOA7, close to BOA9, could potentially be involved in the hydroxylation at C4 in the side chain of botcinins. This is FAD-dependent monooxygenase BOA8 from Botryotinia fuckeliana (strain B05.10) (Noble rot fungus).